We begin with the raw amino-acid sequence, 224 residues long: BOS complex subunit TMEM147 (224 aa).

A helical membrane pass occupies residues 1-21; the sequence is MTLFHFGNCFALAYFPYFITY. The Cytoplasmic portion of the chain corresponds to 22 to 34; sequence KCSGLSEYNAFWK. A helical transmembrane segment spans residues 35-58; it reads CVQAGVTYLFVQLCKMLFLATFFP. The Lumenal segment spans residues 59-66; that stretch reads TWEGGIYD. Residues 67 to 88 traverse the membrane as a helical segment; it reads FIGEFMKASVDVADLIGLNLVM. Topologically, residues 89–98 are cytoplasmic; sequence SRNAGKGEYK. A helical transmembrane segment spans residues 99 to 124; the sequence is IMVAALGWATAELIMSRCIPLWVGAR. The Lumenal portion of the chain corresponds to 125–129; that stretch reads GIEFD. The chain crosses the membrane as a helical span at residues 130–155; that stretch reads WKYIQMSIDSNISLVHYIVASAQVWM. Topologically, residues 156–164 are cytoplasmic; the sequence is ITRYDLYHT. Residues 165–187 traverse the membrane as a helical segment; it reads FRPAVLLLMFLSVYKAFVMETFV. At 188–194 the chain is on the lumenal side; the sequence is HLCSLGS. A helical membrane pass occupies residues 195–216; sequence WTALLARAVVTGLLALSTLALY. At 217–224 the chain is on the cytoplasmic side; sequence VAVVNVHS.

This sequence belongs to the TMEM147 family. In terms of assembly, component of the back of Sec61 (BOS) complex, composed of NCLN/Nicalin, NOMO1 and TMEM147. The BOS complex is part of the multi-pass translocon (MPT) complex, composed of three subcomplexes, the GEL complex (composed of RAB5IF/OPTI and TMCO1), the BOS complex (composed of NCLN/Nicalin, NOMO1 and TMEM147) and the PAT complex (composed of WDR83OS/Asterix and CCDC47). The MPT complex associates with the SEC61 complex. Interacts with CHRM3, CHRM1 and AVPR2. Interacts with LBR; promoting LBR localization to the nucleus inner membrane. Interacts with DHCR7.

Its subcellular location is the endoplasmic reticulum membrane. The protein resides in the nucleus membrane. The protein localises to the cell membrane. Functionally, component of the multi-pass translocon (MPT) complex that mediates insertion of multi-pass membrane proteins into the lipid bilayer of membranes. The MPT complex takes over after the SEC61 complex: following membrane insertion of the first few transmembrane segments of proteins by the SEC61 complex, the MPT complex occludes the lateral gate of the SEC61 complex to promote insertion of subsequent transmembrane regions. Also acts as a negative regulator of CHRM3 function, most likely by interfering with its trafficking to the cell membrane. Negatively regulates CHRM3-mediated calcium mobilization and activation of RPS6KA1/p90RSK activity. Regulates LBR localization to the nucleus inner membrane. The polypeptide is BOS complex subunit TMEM147 (Canis lupus familiaris (Dog)).